Reading from the N-terminus, the 365-residue chain is Ribosome biogenesis regulatory protein homolog (365 aa).

M1 carries the post-translational modification N-acetylmethionine. S5 bears the Phosphoserine mark. Glycyl lysine isopeptide (Lys-Gly) (interchain with G-Cter in SUMO2) cross-links involve residues K154 and K226. Residues 233–253 (GRFQERLPKEKVPRGSGKKRK) form a disordered region. A compositionally biased stretch (basic and acidic residues) spans 235–245 (FQERLPKEKVP). K266 is covalently cross-linked (Glycyl lysine isopeptide (Lys-Gly) (interchain with G-Cter in SUMO2)). R273 carries the citrulline modification. The interval 280–365 (PQLDVTRATN…GQRPGGKRRK (86 aa)) is disordered. Residues 302 to 325 (KRRKMSQKGKRKGGRQGPGGKRKG) show a composition bias toward basic residues. Residues 337 to 350 (GLGGKMNSGPPGLG) show a composition bias toward gly residues. Residues 351–365 (GKRKGGQRPGGKRRK) show a composition bias toward basic residues.

This sequence belongs to the RRS1 family. Component of a hexameric 5S RNP precursor complex, composed of 5S RNA, RRS1, RPF2/BXDC1, RPL5, RPL11 and HEATR3; this complex acts as a precursor for ribosome assembly. Citrullinated by PADI4.

The protein resides in the nucleus. The protein localises to the nucleolus. Involved in ribosomal large subunit assembly. May regulate the localization of the 5S RNP/5S ribonucleoprotein particle to the nucleolus. The protein is Ribosome biogenesis regulatory protein homolog (RRS1) of Homo sapiens (Human).